The sequence spans 630 residues: Long-chain-fatty-acid--AMP ligase FadD32 (630 aa).

ATP contacts are provided by residues 187-192, serine 342, alanine 346, aspartate 469, and arginine 483; that span reads TSGSTR.

It belongs to the ATP-dependent AMP-binding enzyme family. As to quaternary structure, monomer.

The catalysed reaction is a long-chain fatty acid + holo-[ACP] + ATP = a long-chain fatty acyl-[ACP] + AMP + diphosphate. It catalyses the reaction decanoate + ATP + H(+) = decanoyl-AMP + diphosphate. The enzyme catalyses dodecanoate + ATP + H(+) = dodecanoyl-AMP + diphosphate. It carries out the reaction tetradecanoate + ATP + H(+) = tetradecanoyl-AMP + diphosphate. It functions in the pathway lipid metabolism; mycolic acid biosynthesis. With respect to regulation, the acyl-AMP ligase activity is inhibited by the alkylphosphate ester of AMP, adenosine 50-dodecylphosphate (AMPC12). Also inhibited by eicosyl-AMP (AMPC20). In terms of biological role, involved in the biosynthesis of mycolic acids. Catalyzes the activation of long-chain fatty acids as acyl-adenylates (acyl-AMP), which are then transferred to the phosphopantetheine arm of the polyketide synthase Pks13 for further chain extension. Can use decanoate (C10), dodecanoate (C12) and tetradecanoate (C14). This is Long-chain-fatty-acid--AMP ligase FadD32 from Mycolicibacterium smegmatis (strain ATCC 700084 / mc(2)155) (Mycobacterium smegmatis).